Reading from the N-terminus, the 158-residue chain is ABA-responsive protein ABR18 (158 aa).

This sequence belongs to the BetVI family.

This chain is ABA-responsive protein ABR18, found in Pisum sativum (Garden pea).